A 72-amino-acid chain; its full sequence is Sec-independent protein translocase protein TatA (72 aa).

Residues 1–21 (MGSFSIWHWLIVLAVVLLLFG) form a helical membrane-spanning segment. The disordered stretch occupies residues 43 to 72 (MADEDAKEDPRTIDAKAEEPVKDVKKTTKS). The span at 50–72 (EDPRTIDAKAEEPVKDVKKTTKS) shows a compositional bias: basic and acidic residues.

It belongs to the TatA/E family. The Tat system comprises two distinct complexes: a TatABC complex, containing multiple copies of TatA, TatB and TatC subunits, and a separate TatA complex, containing only TatA subunits. Substrates initially bind to the TatABC complex, which probably triggers association of the separate TatA complex to form the active translocon.

The protein localises to the cell inner membrane. Functionally, part of the twin-arginine translocation (Tat) system that transports large folded proteins containing a characteristic twin-arginine motif in their signal peptide across membranes. TatA could form the protein-conducting channel of the Tat system. The chain is Sec-independent protein translocase protein TatA from Brucella suis biovar 1 (strain 1330).